We begin with the raw amino-acid sequence, 311 residues long: Methionyl-tRNA formyltransferase (311 aa).

109–112 contributes to the (6S)-5,6,7,8-tetrahydrofolate binding site; the sequence is SLLP.

This sequence belongs to the Fmt family.

The catalysed reaction is L-methionyl-tRNA(fMet) + (6R)-10-formyltetrahydrofolate = N-formyl-L-methionyl-tRNA(fMet) + (6S)-5,6,7,8-tetrahydrofolate + H(+). Functionally, attaches a formyl group to the free amino group of methionyl-tRNA(fMet). The formyl group appears to play a dual role in the initiator identity of N-formylmethionyl-tRNA by promoting its recognition by IF2 and preventing the misappropriation of this tRNA by the elongation apparatus. The chain is Methionyl-tRNA formyltransferase from Moorella thermoacetica (strain ATCC 39073 / JCM 9320).